The following is a 187-amino-acid chain: Homeobox expressed in ES cells 1-B (187 aa).

The homeobox DNA-binding region spans 110-169 (GRRPRTAFTRSQIEILENVFRVNSYPGIDVREELASKLALDEDRIQIWFQNRRAKLKRSH).

The protein belongs to the ANF homeobox family. In terms of assembly, the N-terminus interacts with the LIM 2 domain of zyx. In terms of tissue distribution, first expressed at a low level in the late blastula stage (stage 9) in most cells of the animal half of the embryo. Following this, predominantly expressed in two zones; the dorsal blastopore lip (Spemann organizer) at the beginning of gastrulation, and subsequently in the anterior part of the neural anlage (the region of future forebrain).

Its subcellular location is the nucleus. Its function is as follows. Regulates the earliest stages of development of the anterior neural plate. Plays a role in forebrain development by inhibiting the expression of otx2 and pax6 in the rostral region of the anterior neural plate. Necessary for both neural differentiation and neural patterning. Controls Spemann organizer development. May act as a transcriptional repressor. This is Homeobox expressed in ES cells 1-B (hesx1-b) from Xenopus laevis (African clawed frog).